A 501-amino-acid polypeptide reads, in one-letter code: Probable cytosol aminopeptidase (501 aa).

Lysine 272 and aspartate 277 together coordinate Mn(2+). Lysine 284 is an active-site residue. The Mn(2+) site is built by aspartate 295, aspartate 354, and glutamate 356. Residue arginine 358 is part of the active site.

This sequence belongs to the peptidase M17 family. It depends on Mn(2+) as a cofactor.

The protein localises to the cytoplasm. It carries out the reaction Release of an N-terminal amino acid, Xaa-|-Yaa-, in which Xaa is preferably Leu, but may be other amino acids including Pro although not Arg or Lys, and Yaa may be Pro. Amino acid amides and methyl esters are also readily hydrolyzed, but rates on arylamides are exceedingly low.. The enzyme catalyses Release of an N-terminal amino acid, preferentially leucine, but not glutamic or aspartic acids.. Functionally, presumably involved in the processing and regular turnover of intracellular proteins. Catalyzes the removal of unsubstituted N-terminal amino acids from various peptides. The protein is Probable cytosol aminopeptidase of Buchnera aphidicola subsp. Baizongia pistaciae (strain Bp).